Consider the following 303-residue polypeptide: Signal recognition particle receptor FtsY (303 aa).

GTP is bound by residues 108–115 (GVNGVGKT), 190–194 (DTAGR), and 254–257 (TKLD).

This sequence belongs to the GTP-binding SRP family. FtsY subfamily. In terms of assembly, part of the signal recognition particle protein translocation system, which is composed of SRP and FtsY. SRP is a ribonucleoprotein composed of Ffh and a 4.5S RNA molecule.

The protein resides in the cell inner membrane. The protein localises to the cytoplasm. It catalyses the reaction GTP + H2O = GDP + phosphate + H(+). Functionally, involved in targeting and insertion of nascent membrane proteins into the cytoplasmic membrane. Acts as a receptor for the complex formed by the signal recognition particle (SRP) and the ribosome-nascent chain (RNC). Interaction with SRP-RNC leads to the transfer of the RNC complex to the Sec translocase for insertion into the membrane, the hydrolysis of GTP by both Ffh and FtsY, and the dissociation of the SRP-FtsY complex into the individual components. This Rickettsia prowazekii (strain Madrid E) protein is Signal recognition particle receptor FtsY.